A 191-amino-acid polypeptide reads, in one-letter code: Glycerol-3-phosphate acyltransferase (191 aa).

The next 5 helical transmembrane spans lie at 3-23 (YLIV…FILT), 51-71 (TLGY…VLYV), 78-98 (YIFI…WLKF), 108-128 (VGIL…SWAV), and 150-170 (YLIV…VLIF).

The protein belongs to the PlsY family. Probably interacts with PlsX.

Its subcellular location is the cell inner membrane. It carries out the reaction an acyl phosphate + sn-glycerol 3-phosphate = a 1-acyl-sn-glycero-3-phosphate + phosphate. It participates in lipid metabolism; phospholipid metabolism. Catalyzes the transfer of an acyl group from acyl-phosphate (acyl-PO(4)) to glycerol-3-phosphate (G3P) to form lysophosphatidic acid (LPA). This enzyme utilizes acyl-phosphate as fatty acyl donor, but not acyl-CoA or acyl-ACP. The sequence is that of Glycerol-3-phosphate acyltransferase from Pelagibacter ubique (strain HTCC1062).